A 401-amino-acid polypeptide reads, in one-letter code: 4-hydroxy-3-methylbut-2-en-1-yl diphosphate synthase (ferredoxin) (401 aa).

[4Fe-4S] cluster-binding residues include cysteine 306, cysteine 309, cysteine 340, and glutamate 347.

Belongs to the IspG family. The cofactor is [4Fe-4S] cluster.

The catalysed reaction is (2E)-4-hydroxy-3-methylbut-2-enyl diphosphate + 2 oxidized [2Fe-2S]-[ferredoxin] + H2O = 2-C-methyl-D-erythritol 2,4-cyclic diphosphate + 2 reduced [2Fe-2S]-[ferredoxin] + H(+). It participates in isoprenoid biosynthesis; isopentenyl diphosphate biosynthesis via DXP pathway; isopentenyl diphosphate from 1-deoxy-D-xylulose 5-phosphate: step 5/6. Converts 2C-methyl-D-erythritol 2,4-cyclodiphosphate (ME-2,4cPP) into 1-hydroxy-2-methyl-2-(E)-butenyl 4-diphosphate. This Synechococcus sp. (strain CC9902) protein is 4-hydroxy-3-methylbut-2-en-1-yl diphosphate synthase (ferredoxin).